The chain runs to 1451 residues: Dicer-like protein 2 (1451 aa).

A disordered region spans residues 34-53 (YDGHLSEEDSPGGKPRPKEQ). The Helicase ATP-binding domain maps to 70-247 (MLEASLKENI…LKRLESTLDA (178 aa)). 83 to 90 (MDTGSGKT) provides a ligand contact to ATP. A DEAH box motif is present at residues 190 to 193 (DEAH). Residues 412 to 582 (KVQRIIEVLL…RLEAIENSEA (171 aa)) form the Helicase C-terminal domain. The Dicer dsRNA-binding fold domain occupies 603 to 704 (AKSHLQHFVS…LPLRDRLELE (102 aa)). 2 consecutive RNase III domains span residues 968-1111 (AAEL…VDGG) and 1153-1351 (LQLL…VDAG). Residue glutamate 1192 participates in Mg(2+) binding. The interval 1253 to 1272 (EGDSDSKSSGDSTSDKASPR) is disordered. 2 residues coordinate Mg(2+): aspartate 1337 and glutamate 1340.

The protein belongs to the helicase family. Dicer subfamily. Mg(2+) is required as a cofactor. It depends on Mn(2+) as a cofactor.

In terms of biological role, dicer-like endonuclease involved in cleaving double-stranded RNA in the RNA interference (RNAi) pathway. Produces 21 to 25 bp dsRNAs (siRNAs) which target the selective destruction of homologous RNAs leading to sequence-specific suppression of gene expression, called post-transcriptional gene silencing (PTGS). Part of a broad host defense, DCL-2 is involved in antiviral defense against mycoviruses like the hypovirus CHV1-EP713 and the reovirus MyRV1-Cp9B21. The chain is Dicer-like protein 2 (DCL-2) from Cryphonectria parasitica (Chestnut blight fungus).